A 501-amino-acid polypeptide reads, in one-letter code: Nuclear receptor-binding protein 2 (501 aa).

The disordered stretch occupies residues 1 to 33 (MAAPEPAPRRAREREREREDESEDESDILEESP). Residues 7–19 (APRRARERERERE) are compositionally biased toward basic and acidic residues. Residues 20–30 (DESEDESDILE) are compositionally biased toward acidic residues. The Protein kinase domain maps to 38-306 (QKRREQVNQG…AHSLLFHRVL (269 aa)). Thr409 and Thr411 each carry phosphothreonine.

It belongs to the protein kinase superfamily. Ser/Thr protein kinase family.

Its subcellular location is the cytoplasm. In terms of biological role, may regulate apoptosis of neural progenitor cells during their differentiation. This chain is Nuclear receptor-binding protein 2, found in Homo sapiens (Human).